Here is a 617-residue protein sequence, read N- to C-terminus: uncharacterized protein (617 aa).

2 stretches are compositionally biased toward low complexity: residues 1–16 and 36–45; these read MSKC…SNSS and STTSSNGSNS. The interval 1–49 is disordered; it reads MSKCATPTPSTSSNSSDEAKRSPQPMSRGFPQRNMSTTSSNGSNSPRHR. The next 3 membrane-spanning stretches (helical) occupy residues 219–239, 262–282, and 427–447; these read LMIG…GGLA, TAGA…FTGY, and PITL…LLTM.

Belongs to the TMCO4 family.

It localises to the membrane. This is an uncharacterized protein from Caenorhabditis elegans.